The primary structure comprises 278 residues: Asnovolin E/Chermesin D methyltransferase nvfJ (278 aa).

S-adenosyl-L-methionine-binding positions include Asp-125–Leu-126, Asn-152–Ile-153, and Ile-153–Leu-154.

The protein belongs to the class I-like SAM-binding methyltransferase superfamily. In terms of assembly, homodimer.

The enzyme catalyses chermesin D + S-adenosyl-L-methionine = chermesin D methyl ester + S-adenosyl-L-homocysteine. It catalyses the reaction asnovolin I + S-adenosyl-L-methionine = asnovolin K + S-adenosyl-L-homocysteine. The protein operates within secondary metabolite biosynthesis; terpenoid biosynthesis. In terms of biological role, methyltransferase; part of the gene cluster that mediates the biosynthesis of novofumigatonin, a heavily oxygenated meroterpenoid containing a unique orthoester moiety. The first step of the pathway is the synthesis of 3,5-dimethylorsellinic acid (DMOA) by the polyketide synthase nvfA via condensation of one acetyl-CoA starter unit with 3 malonyl-CoA units and 2 methylations. DMOA is then converted to farnesyl-DMOA by the farnesyltransferase nvfB. Epoxydation by FAD-dependent monooxygenase nvfK, followed by a protonation-initiated cyclization catalyzed by the terpene cyclase nvfL leads to the production of asnavolin H. The short chain dehydrogenase nvfC then as a 3-OH dehydrogenase of asnovolin H to yield chemesin D. There are two branches to synthesize asnovolin A from chemesin D. In one branch, chemesin D undergoes Baeyer-Villiger oxidation by nvfH, methylation by nvfJ, and enoyl reduction by the nvfM D enoylreductase that reduces the double bond between C-5'and C-6', to form respectively asnovolin I, asnovolin K, and asnovolin A. In the other branch, the methylation precedes the Baeyer-Villiger oxidation and the enoyl reduction to yield asnovolin A via the asnovolin J intermediate. Asnovolin A is further converted to fumigatonoid A by the Fe(II)/2-oxoglutarate-dependent dioxygenase nvfI that catalyzes an endoperoxidation reaction. The alpha/beta hydrolase nvfD then acts as an epimerase that converts fumigatonoid A to its C-5' epimer, which then undergoes spontaneous or nvfD-catalyzed lactonization. The following step utilizes the ketoreductase nvfG to produce fumigatonoid B. The dioxygenase nvfE further converts fumigatonoid B into fumigatonoid C. Finally the Fe(II)/2-oxoglutarate-dependent dioxygenase nvfF catalyzes two rounds of oxidation to transform fumigatonoid C into the end product, novofumigatonin A. In Aspergillus novofumigatus (strain IBT 16806), this protein is Asnovolin E/Chermesin D methyltransferase nvfJ.